The sequence spans 462 residues: G-patch domain and KOW motifs-containing protein homolog 1 (462 aa).

2 disordered regions span residues 1 to 26 (MVEQ…KREE) and 182 to 218 (LKLP…EEEK). In terms of domain architecture, G-patch spans 154–202 (IESFGLAILRGCNWKDGDGIGKNPQKVALKLPNRRPPGLGLGATPKNPV). One can recognise a KOW 1 domain in the interval 221–248 (EIKVGSFIKVVDGRNKGVYGKVEGRDDD). Basic and acidic residues predominate over residues 289 to 305 (EYDKEKDRLETERKKLE). Positions 289–337 (EYDKEKDRLETERKKLESQPPSTSTSQSSKDYKSKSSSSKHDKNSSEYE) are disordered. Residues 306 to 317 (SQPPSTSTSQSS) are compositionally biased toward low complexity. The segment covering 318–337 (KDYKSKSSSSKHDKNSSEYE) has biased composition (basic and acidic residues). The region spanning 401–428 (PREIGEKLMIVAGKRSGQLAVMLDKDKR) is the KOW 2 domain.

This sequence belongs to the MOS2 family.

It is found in the nucleus. The chain is G-patch domain and KOW motifs-containing protein homolog 1 from Caenorhabditis elegans.